The sequence spans 330 residues: Polyprenal reductase (330 aa).

Residues 1-16 (MAGWAGFELSALNPLR) are Cytoplasmic-facing. Residues 17–37 (TLWLALAAAFLFALLLQLAPA) traverse the membrane as a helical segment. The Lumenal segment spans residues 38–80 (RLLPSCALFQDLLRYGKTKQSGSRRPAVCRAFDVPKRYFSHFY). The chain crosses the membrane as a helical span at residues 81–101 (VISVVWNGSLLWLLSQSLFLG). Residues 102-132 (APFPNWLSALLRTLGATQFQALEMESKASRM) are Cytoplasmic-facing. The helical transmembrane segment at 133–153 (PAAELALSAFLVLVFLWVHSL) threads the bilayer. At 154-169 (RRLFECFYVSVFSNAA) the chain is on the lumenal side. Residues 170–190 (IHVVQYCFGLVYYVLVGLTVL) form a helical membrane-spanning segment. Residues 191 to 206 (SQVPMDDKNVYVLGKN) lie on the Cytoplasmic side of the membrane. The helical transmembrane segment at 207 to 227 (LLIQARWFHILGMVMFFWSSA) threads the bilayer. Residues 228 to 277 (HQYKCHVILSNLRRNKKGVVIHCQHRIPFGDWFEYVSSANYLAELMIYIS) are Lumenal-facing. The helical transmembrane segment at 278–298 (MAVTFGLHNLTWWLVVTYVFS) threads the bilayer. Residues 299–330 (SQALSAFFNHKFYRSTFVSYPKHRKAFLPFLF) lie on the Cytoplasmic side of the membrane.

Belongs to the steroid 5-alpha reductase family. Polyprenal reductase subfamily.

It localises to the endoplasmic reticulum membrane. It catalyses the reaction a di-trans,poly-cis-dolichal + NADP(+) = a di-trans,poly-cis-polyprenal + NADPH + H(+). The catalysed reaction is a 3-oxo-5alpha-steroid + NADP(+) = a 3-oxo-Delta(4)-steroid + NADPH + H(+). The enzyme catalyses androst-4-ene-3,17-dione + NADPH + H(+) = 5alpha-androstan-3,17-dione + NADP(+). It carries out the reaction 17beta-hydroxy-5alpha-androstan-3-one + NADP(+) = testosterone + NADPH + H(+). The protein operates within protein modification; protein glycosylation. In terms of biological role, plays a key role in early steps of protein N-linked glycosylation by being involved in the conversion of polyprenol into dolichol. Acts as a polyprenal reductase that mediates the reduction of polyprenal into dolichal in a NADP-dependent mechanism. Dolichols are required for the synthesis of dolichol-linked monosaccharides and the oligosaccharide precursor used for N-glycosylation. Also able to convert testosterone (T) into 5-alpha-dihydrotestosterone (DHT). This Mus musculus (Mouse) protein is Polyprenal reductase.